The sequence spans 63 residues: Beta-defensin 3 (63 aa).

A signal peptide spans 1–20 (MRIHYLLFAFLLVLLSPPAA). The propeptide occupies 21–22 (FS). Intrachain disulfides connect C31/C59, C38/C52, and C42/C60.

This sequence belongs to the beta-defensin family. LAP/TAP subfamily. As to expression, highest expression in salivary glands, epididymis, ovary and pancreas and to a lesser extent in lung, liver and brain. Low or no expression in skeletal muscle and tongue.

The protein localises to the secreted. In terms of biological role, antimicrobial activity against Gram-negative bacteria E.coli and P.aeruginosa. The sequence is that of Beta-defensin 3 (Defb3) from Mus musculus (Mouse).